Here is a 126-residue protein sequence, read N- to C-terminus: Large ribosomal subunit protein bL17 (126 aa).

It belongs to the bacterial ribosomal protein bL17 family. Part of the 50S ribosomal subunit. Contacts protein L32.

This chain is Large ribosomal subunit protein bL17, found in Laribacter hongkongensis (strain HLHK9).